The following is a 479-amino-acid chain: Glutamate--tRNA ligase 2 (479 aa).

Residues 18–28 (PSPTGFLHIGG) carry the 'HIGH' region motif. The 'KMSKS' region signature appears at 244–248 (KLSKR). Residue Lys247 participates in ATP binding.

The protein belongs to the class-I aminoacyl-tRNA synthetase family. Glutamate--tRNA ligase type 1 subfamily. In terms of assembly, monomer.

The protein localises to the cytoplasm. It catalyses the reaction tRNA(Glu) + L-glutamate + ATP = L-glutamyl-tRNA(Glu) + AMP + diphosphate. Catalyzes the attachment of glutamate to tRNA(Glu) in a two-step reaction: glutamate is first activated by ATP to form Glu-AMP and then transferred to the acceptor end of tRNA(Glu). The sequence is that of Glutamate--tRNA ligase 2 from Maricaulis maris (strain MCS10) (Caulobacter maris).